A 233-amino-acid chain; its full sequence is NAD(P)H-hydrate epimerase (233 aa).

A YjeF N-terminal domain is found at 15-218 (SQQFDVELMS…KLQEKYNFIV (204 aa)). Residue 67–71 (NNGGD) coordinates (6S)-NADPHX. 2 residues coordinate K(+): Asn68 and Asp128. Residues 132–138 (GFSFKPP), Tyr143, and Asp161 each bind (6S)-NADPHX. Residue Ser164 participates in K(+) binding.

This sequence belongs to the NnrE/AIBP family. The cofactor is K(+).

It catalyses the reaction (6R)-NADHX = (6S)-NADHX. It carries out the reaction (6R)-NADPHX = (6S)-NADPHX. Its function is as follows. Catalyzes the epimerization of the S- and R-forms of NAD(P)HX, a damaged form of NAD(P)H that is a result of enzymatic or heat-dependent hydration. This is a prerequisite for the S-specific NAD(P)H-hydrate dehydratase to allow the repair of both epimers of NAD(P)HX. This Paramecium tetraurelia protein is NAD(P)H-hydrate epimerase.